The sequence spans 300 residues: Mitochondrial carnitine/acylcarnitine carrier-like protein (300 aa).

3 Solcar repeats span residues 2 to 93 (ADAW…MEGL), 102 to 201 (LTIS…FKRF), and 211 to 298 (LGQG…TRSS). Helical transmembrane passes span 8 to 28 (LASG…FDTI), 64 to 84 (GLYK…AVLF), 108 to 128 (FVAG…TELI), 176 to 195 (GLFP…FAAY), 211 to 231 (LGQG…WGIV), and 273 to 292 (GFGP…FLAY).

This sequence belongs to the mitochondrial carrier (TC 2.A.29) family. High expression in cotyledons, leaves, flowers and developing siliques. Lower expression in roots and maturing siliques. Not detected in meristematic tissues.

The protein resides in the mitochondrion inner membrane. Functionally, involved in photorespiratory metabolism. Acts probably as a carrier for a glycine decarboxylase (GDC) cofactor or, alternatively, may act as a mitochondrial glycine shuttle. Involved in the transition from the embryonic stage to the juvenile autotrophic stage. In Arabidopsis thaliana (Mouse-ear cress), this protein is Mitochondrial carnitine/acylcarnitine carrier-like protein (BOU).